Reading from the N-terminus, the 463-residue chain is MAAGRDGVIHLLRQLQRASCRCPAHSHTYSQAPATARTTDYAFEMAVSSIRYGENVTQEIGMDLQNWGTRNVCVMTDRNLSELSPVKAVLNSLVKNGINFKLYDSVRVEPTDKSFMDAIEFAKKGQFDAFVAVGGGSVIDTCKAANLYSSSPDSDFLDYVNPPIGKGKAVTVPLKPLIAVPTTSGTGSETTGIAIFDYEELKAKTGIASRAIKPTLGLIDPAHTLSMPERVVANSGFDVLCHSLESYTALPYNMRSPCPTNPINRPAYQGSNPISDVWAKHALRIVAKFLKRAVRNPDDREARFAMHLASSFAGVGFGNAGVHLCHGMSYPIAGHVKTYRAKDYKVDHPLVPHGLSVVLTSPAVFSFTGLMCPERHLEAAEILGADLRTAKIKDAGLILADTLRKFLYDLNVDDGLAAVGYTAEDIPALVKGTLPQERVTKLSPRAHSEEELAALFEASMKLY.

The protein belongs to the iron-containing alcohol dehydrogenase family. Hydroxyacid-oxoacid transhydrogenase subfamily.

Its subcellular location is the mitochondrion. It catalyses the reaction (S)-3-hydroxybutanoate + 2-oxoglutarate = (R)-2-hydroxyglutarate + acetoacetate. The catalysed reaction is 4-hydroxybutanoate + 2-oxoglutarate = (R)-2-hydroxyglutarate + succinate semialdehyde. In terms of biological role, catalyzes the cofactor-independent reversible oxidation of gamma-hydroxybutyrate (GHB) to succinic semialdehyde (SSA) coupled to reduction of 2-ketoglutarate (2-KG) to D-2-hydroxyglutarate (D-2-HG). L-3-hydroxybutyrate (L-3-OHB) is also a substrate for HOT when using 2-KG as hydrogen acceptor, resulting in the formation of D-2-HG. This is Hydroxyacid-oxoacid transhydrogenase, mitochondrial (adhfe1) from Xenopus laevis (African clawed frog).